The sequence spans 231 residues: Large ribosomal subunit protein uL1 (231 aa).

The protein belongs to the universal ribosomal protein uL1 family. As to quaternary structure, part of the 50S ribosomal subunit.

Its function is as follows. Binds directly to 23S rRNA. The L1 stalk is quite mobile in the ribosome, and is involved in E site tRNA release. Protein L1 is also a translational repressor protein, it controls the translation of the L11 operon by binding to its mRNA. The polypeptide is Large ribosomal subunit protein uL1 (Azoarcus sp. (strain BH72)).